A 354-amino-acid chain; its full sequence is Histidinol-phosphate aminotransferase (354 aa).

N6-(pyridoxal phosphate)lysine is present on K222.

The protein belongs to the class-II pyridoxal-phosphate-dependent aminotransferase family. Histidinol-phosphate aminotransferase subfamily. As to quaternary structure, homodimer. It depends on pyridoxal 5'-phosphate as a cofactor.

It catalyses the reaction L-histidinol phosphate + 2-oxoglutarate = 3-(imidazol-4-yl)-2-oxopropyl phosphate + L-glutamate. The protein operates within amino-acid biosynthesis; L-histidine biosynthesis; L-histidine from 5-phospho-alpha-D-ribose 1-diphosphate: step 7/9. The chain is Histidinol-phosphate aminotransferase from Staphylococcus carnosus (strain TM300).